A 918-amino-acid chain; its full sequence is Isoleucine--tRNA ligase (918 aa).

Positions 59–69 (PYANGHLHIGH) match the 'HIGH' region motif. Residue glutamate 570 coordinates L-isoleucyl-5'-AMP. A 'KMSKS' region motif is present at residues 611–615 (KMSKS). Lysine 614 is an ATP binding site. Residues cysteine 893, cysteine 896, cysteine 908, and cysteine 911 each contribute to the Zn(2+) site.

The protein belongs to the class-I aminoacyl-tRNA synthetase family. IleS type 1 subfamily. In terms of assembly, monomer. It depends on Zn(2+) as a cofactor.

It is found in the cytoplasm. The enzyme catalyses tRNA(Ile) + L-isoleucine + ATP = L-isoleucyl-tRNA(Ile) + AMP + diphosphate. Catalyzes the attachment of isoleucine to tRNA(Ile). As IleRS can inadvertently accommodate and process structurally similar amino acids such as valine, to avoid such errors it has two additional distinct tRNA(Ile)-dependent editing activities. One activity is designated as 'pretransfer' editing and involves the hydrolysis of activated Val-AMP. The other activity is designated 'posttransfer' editing and involves deacylation of mischarged Val-tRNA(Ile). The sequence is that of Isoleucine--tRNA ligase from Campylobacter concisus (strain 13826).